A 174-amino-acid polypeptide reads, in one-letter code: Gamma-crystallin A (174 aa).

2 Beta/gamma crystallin 'Greek key' domains span residues 2 to 40 (GKITFYEDRDFQGRCYNCISDCPNLRVYFSRCNSIRVDS) and 41 to 83 (GCWM…RIIP). Residues 84–87 (HTSS) are connecting peptide. Beta/gamma crystallin 'Greek key' domains are found at residues 88–128 (HKLR…HVLE) and 129–171 (GCWV…RRVT).

This sequence belongs to the beta/gamma-crystallin family. In terms of assembly, monomer.

Its function is as follows. Crystallins are the dominant structural components of the vertebrate eye lens. This chain is Gamma-crystallin A (CRYGA), found in Homo sapiens (Human).